The chain runs to 429 residues: Probable E3 ubiquitin-protein ligase makorin-1 (429 aa).

3 consecutive C3H1-type zinc fingers follow at residues tryptophan 18–threonine 45, lysine 48–proline 75, and glutamate 153–valine 180. The segment at cysteine 181–histidine 208 is makorin-type Cys-His. Residues cysteine 226–arginine 280 form an RING-type zinc finger. Residues glycine 309–proline 338 form a C3H1-type 4 zinc finger. The tract at residues glutamate 343–arginine 362 is disordered. Residues glutamine 348 to asparagine 358 are compositionally biased toward low complexity.

It catalyses the reaction S-ubiquitinyl-[E2 ubiquitin-conjugating enzyme]-L-cysteine + [acceptor protein]-L-lysine = [E2 ubiquitin-conjugating enzyme]-L-cysteine + N(6)-ubiquitinyl-[acceptor protein]-L-lysine.. The protein operates within protein modification; protein ubiquitination. Its function is as follows. E3 ubiquitin ligase catalyzing the covalent attachment of ubiquitin moieties onto substrate proteins. This chain is Probable E3 ubiquitin-protein ligase makorin-1, found in Takifugu rubripes (Japanese pufferfish).